The following is a 997-amino-acid chain: Sarcoplasmic/endoplasmic reticulum calcium ATPase 2 (997 aa).

Over 1-48 (MENAHTKTVEEVLGYFGVNESTGLSLEQVKKLKERWGSNELPAEEGKT) the chain is Cytoplasmic. Phosphoserine is present on Ser-38. A helical membrane pass occupies residues 49–69 (LLELVIEQFEDLLVRILLLAA). Over 70 to 89 (CISFVLAWFEEGEETITAFV) the chain is Lumenal. The helical transmembrane segment at 90–110 (EPFVILLILVANAIVGVWQER) threads the bilayer. The Cytoplasmic portion of the chain corresponds to 111–253 (NAENAIEALK…QERTPLQQKL (143 aa)). A helical transmembrane segment spans residues 254 to 273 (DEFGEQLSKVISLICIAVWI). Over 274-295 (INIGHFNDPVHGGSWIRGAIYY) the chain is Lumenal. 2 positions are modified to 3'-nitrotyrosine: Tyr-294 and Tyr-295. The helical transmembrane segment at 296 to 313 (FKIAVALAVAAIPEGLPA) threads the bilayer. Ca(2+) contacts are provided by Val-304, Ala-305, Ile-307, and Glu-309. At 314-756 (VITTCLALGT…EEGRAIYNNM (443 aa)) the chain is on the cytoplasmic side. The active-site 4-aspartylphosphate intermediate is Asp-351. Asp-351 and Thr-353 together coordinate Mg(2+). An ATP-binding site is contributed by Thr-353. Position 441 is a phosphothreonine (Thr-441). ATP contacts are provided by Glu-442, Arg-489, and Lys-514. Ser-531 bears the Phosphoserine mark. Arg-559 serves as a coordination point for ATP. The interaction with HAX1 stretch occupies residues 575–594 (MNLEDSANFIKYETNLTFVG). Ser-580 carries the post-translational modification Phosphoserine. 3 residues coordinate ATP: Thr-624, Gly-625, and Asp-626. Residues Ser-661 and Ser-663 each carry the phosphoserine modification. Positions 677 and 683 each coordinate ATP. A Mg(2+)-binding site is contributed by Asp-702. Asn-705 contributes to the ATP binding site. A helical membrane pass occupies residues 757–776 (KQFIRYLISSNVGEVVCIFL). Positions 767 and 770 each coordinate Ca(2+). At 777–786 (TAALGFPEAL) the chain is on the lumenal side. Residues 787 to 807 (IPVQLLWVNLVTDGLPATALG) traverse the membrane as a helical segment. The interaction with PLN stretch occupies residues 787-807 (IPVQLLWVNLVTDGLPATALG). The interval 788–997 (PVQLLWVNLV…RNYLEPAILE (210 aa)) is interaction with TMEM64 and PDIA3. Ca(2+) is bound by residues Asn-795, Thr-798, and Asp-799. Residues 808-827 (FNPPDLDIMNKPPRNPKEPL) lie on the Cytoplasmic side of the membrane. Residues 828-850 (ISGWLFFRYLAIGCYVGAATVGA) traverse the membrane as a helical segment. At 851-896 (AAWWFIAADGGPRVSFYQLSHFLQCKDDNPDFEGVDCAIFESPYPM) the chain is on the lumenal side. The cysteines at positions 875 and 887 are disulfide-linked. Residues 897-916 (TMALSVLVTIEMCNALNSLS) form a helical membrane-spanning segment. A Ca(2+)-binding site is contributed by Glu-907. At 917–929 (ENQSLLRMPPWEN) the chain is on the cytoplasmic side. The helical transmembrane segment at 930–948 (IWLVGSICLSMSLHFLILY) threads the bilayer. The tract at residues 931-942 (WLVGSICLSMSL) is interaction with PLN. Topologically, residues 949–963 (VEPLPLIFQITPLNL) are lumenal. A helical transmembrane segment spans residues 964-984 (TQWLMVLKISLPVILMDETLK). At 985–997 (FVARNYLEPAILE) the chain is on the cytoplasmic side.

It belongs to the cation transport ATPase (P-type) (TC 3.A.3) family. Type IIA subfamily. Interacts with sarcolipin (SLN); the interaction inhibits ATP2A2 Ca(2+) affinity. Interacts with phospholamban (PLN); the interaction inhibits ATP2A2 Ca(2+) affinity. Interacts with myoregulin (MRLN). Interacts with ARLN and ERLN; the interactions inhibit ATP2A2 Ca(2+) affinity. Interacts with STRIT1/DWORF; the interaction results in activation of ATP2A2. Interacts with the monomeric forms of SLN, PLN, ARLN, ERLN and STRI1/DWORF. Interacts with HAX1. Interacts with S100A8 and S100A9. Interacts with SLC35G1 and STIM1. Interacts with TMEM203. Interacts with TMEM64 and PDIA3. Interacts with TMX1. Interacts with TMX2. Interacts with VMP1; VMP1 competes with PLN and SLN to prevent them from forming an inhibitory complex with ATP2A2. Interacts with ULK1. Interacts with S100A1 in a Ca(2+)-dependent manner. Interacts with TUNAR. Interacts with FLVCR2; this interaction occurs in the absence of heme and promotes ATP2A2 proteasomal degradation; this complex is dissociated upon heme binding. Interacts with FNIP1. As to quaternary structure, interacts with TRAM2 (via C-terminus). The cofactor is Mg(2+). Nitrated under oxidative stress. Nitration on the two tyrosine residues inhibits catalytic activity. In terms of processing, serotonylated on Gln residues by TGM2 in response to hypoxia, leading to its inactivation. Isoform 1 is expressed in the heart.

Its subcellular location is the endoplasmic reticulum membrane. The protein resides in the sarcoplasmic reticulum membrane. It catalyses the reaction Ca(2+)(in) + ATP + H2O = Ca(2+)(out) + ADP + phosphate + H(+). Its activity is regulated as follows. Has different conformational states with differential Ca2+ affinity. The E1 conformational state (active form) shows high Ca(2+) affinity, while the E2 state exhibits low Ca(2+) affinity. Binding of ATP allosterically increases its affinity for subsequent binding of Ca2+. Reversibly inhibited by phospholamban (PLN) at low calcium concentrations. PLN inhibits ATP2A2 Ca(2+) affinity by disrupting its allosteric activation by ATP. Inhibited by sarcolipin (SLN) and myoregulin (MRLN). The inhibition is blocked by VMP1. Enhanced by STRIT1/DWORF; STRIT1 increases activity by displacing sarcolipin (SLN), phospholamban (PLN) and myoregulin (MRLN). Stabilizes SERCA2 in its E2 state. Its function is as follows. This magnesium-dependent enzyme catalyzes the hydrolysis of ATP coupled with the translocation of calcium from the cytosol to the sarcoplasmic reticulum lumen. Involved in autophagy in response to starvation. Upon interaction with VMP1 and activation, controls ER-isolation membrane contacts for autophagosome formation. Also modulates ER contacts with lipid droplets, mitochondria and endosomes. In coordination with FLVCR2 mediates heme-stimulated switching from mitochondrial ATP synthesis to thermogenesis. Involved in the regulation of the contraction/relaxation cycle. Acts as a regulator of TNFSF11-mediated Ca(2+) signaling pathways via its interaction with TMEM64 which is critical for the TNFSF11-induced CREB1 activation and mitochondrial ROS generation necessary for proper osteoclast generation. Association between TMEM64 and SERCA2 in the ER leads to cytosolic Ca(2+) spiking for activation of NFATC1 and production of mitochondrial ROS, thereby triggering Ca(2+) signaling cascades that promote osteoclast differentiation and activation. The polypeptide is Sarcoplasmic/endoplasmic reticulum calcium ATPase 2 (ATP2A2) (Felis catus (Cat)).